We begin with the raw amino-acid sequence, 461 residues long: Argininosuccinate lyase (461 aa).

It belongs to the lyase 1 family. Argininosuccinate lyase subfamily.

The protein resides in the cytoplasm. It catalyses the reaction 2-(N(omega)-L-arginino)succinate = fumarate + L-arginine. It functions in the pathway amino-acid biosynthesis; L-arginine biosynthesis; L-arginine from L-ornithine and carbamoyl phosphate: step 3/3. This Trichormus variabilis (strain ATCC 29413 / PCC 7937) (Anabaena variabilis) protein is Argininosuccinate lyase.